The sequence spans 230 residues: Demethylmenaquinone methyltransferase (230 aa).

Residues Thr62, Asp80, 100–101 (DA), and Ser117 each bind S-adenosyl-L-methionine.

This sequence belongs to the class I-like SAM-binding methyltransferase superfamily. MenG/UbiE family.

It catalyses the reaction a 2-demethylmenaquinol + S-adenosyl-L-methionine = a menaquinol + S-adenosyl-L-homocysteine + H(+). It functions in the pathway quinol/quinone metabolism; menaquinone biosynthesis; menaquinol from 1,4-dihydroxy-2-naphthoate: step 2/2. In terms of biological role, methyltransferase required for the conversion of demethylmenaquinol (DMKH2) to menaquinol (MKH2). The polypeptide is Demethylmenaquinone methyltransferase (Mycobacterium sp. (strain KMS)).